The primary structure comprises 379 residues: MKFALLSGVAAGLLPVVSAVSVSGAAEGFAKGVTGGGSAAAVYPTTTDELVSYLGDSSPRVIVLDRTFDFTGTEGTTTATGCAPWGTAAACQLAINQNDWCTNYQPDAPSVSVTYDNAGILGITVASDKTILGSGSSGVIKGKGLRIVSGASNIIIQNIAITDLNPKYVWGGDAITLNDADMVWIDHVTTARIGRQHLVLGNDADNRVTVSNSYFNGVSDYSATCDGYAYWGIYFAGSSDLITFKGNYIHHFSGRSPKVQENTLLHAVNNYWYDSTGHAFEIGAGGYVLAEGNVFQNIDTPVQSPIEGQLFTSPDTNTNTVCATYLGRNCEVNGFGSSGTFSQADTAFLVNFEGKNIASASPYADAQSSVPSSAGQGNL.

Residues 1 to 19 (MKFALLSGVAAGLLPVVSA) form the signal peptide. 2 cysteine pairs are disulfide-bonded: C82/C101 and C91/C225. R255 is an active-site residue. C322 and C330 are oxidised to a cystine.

This sequence belongs to the polysaccharide lyase 1 family.

The protein resides in the secreted. The enzyme catalyses Eliminative cleavage of (1-&gt;4)-alpha-D-galacturonan methyl ester to give oligosaccharides with 4-deoxy-6-O-methyl-alpha-D-galact-4-enuronosyl groups at their non-reducing ends.. In terms of biological role, pectinolytic enzymes consist of four classes of enzymes: pectin lyase, polygalacturonase, pectin methylesterase and rhamnogalacturonase. Among pectinolytic enzymes, pectin lyase is the most important in depolymerization of pectin, since it cleaves internal glycosidic bonds of highly methylated pectins. The chain is Probable pectin lyase A (pelA) from Aspergillus oryzae (strain ATCC 42149 / RIB 40) (Yellow koji mold).